Reading from the N-terminus, the 523-residue chain is SWI/SNF and RSC complexes subunit arp9 (523 aa).

Over residues 56-72 (INMEDPNVKTDETKVET) the composition is skewed to basic and acidic residues. Disordered stretches follow at residues 56 to 92 (INMEDPNVKTDETKVETSESTSEQPSNSNVTEEKNMG) and 319 to 339 (QKEREKNGESEKDEKPDNTDV). Residues 79–92 (QPSNSNVTEEKNMG) are compositionally biased toward polar residues. Positions 319 to 336 (QKEREKNGESEKDEKPDN) are enriched in basic and acidic residues.

It belongs to the actin family. Component of the RSC complex composed of at least arp9, arp42, rsc1, rsc4, rsc7, rsc9, rsc58, sfh1, snf21, ssr1, ssr2, ssr3 and ssr4. The complex interacts with histone and histone variant components of centromeric chromatin. Component of the SWI/SNF global transcription activator complex composed of at least arp9, arp42, snf5, snf22, snf30, sbf59, sol1, ssr1, ssr2, ssr3, ssr4 and tfg3.

The protein resides in the cytoplasm. It is found in the nucleus. Component of the chromatin structure remodeling complex (RSC), which is involved in transcription regulation and nucleosome positioning. Controls particularly membrane and organelle development genes. Part of the SWI/SNF complex, an ATP-dependent chromatin remodeling complex, required for the positive and negative regulation of gene expression of a large number of genes. It changes chromatin structure by altering DNA-histone contacts within a nucleosome, leading eventually to a change in nucleosome position, thus facilitating or repressing binding of gene-specific transcription factors. In Schizosaccharomyces pombe (strain 972 / ATCC 24843) (Fission yeast), this protein is SWI/SNF and RSC complexes subunit arp9 (arp9).